The following is a 326-amino-acid chain: Membrane-associated kinase regulator 5 (326 aa).

2 disordered regions span residues 188–239 (TKKQ…GMSP) and 267–326 (GSRE…KISD). Low complexity-rich tracts occupy residues 190–202 (KQSS…PTSS) and 270–305 (ESSL…SSDS).

In terms of tissue distribution, expressed in roots.

It localises to the cell membrane. The protein localises to the cytoplasm. It is found in the cytosol. In terms of biological role, positive effector of CLE45 peptide signaling. Post-transcriptionally regulated amplifier of the CLE45 peptide signal that acts downstream of BAM3 in the regulation of the transition of root protophloem cells from proliferation to differentiation; thus preventing primary root elongation but stimulating lateral roots development. The chain is Membrane-associated kinase regulator 5 from Arabidopsis thaliana (Mouse-ear cress).